An 845-amino-acid chain; its full sequence is Meiotically up-regulated gene 4 protein (845 aa).

A disordered region spans residues 122-158; the sequence is LSTTDEQPKEPSIISISSSSSDPSSSPPPSSSLLKTP. A compositionally biased stretch (low complexity) spans 132–145; the sequence is PSIISISSSSSDPS. A helical transmembrane segment spans residues 726-746; the sequence is FLVFLTFTGMTLFILYQLTFP.

It is found in the membrane. Functionally, has a role in meiosis. This is Meiotically up-regulated gene 4 protein (mug4) from Schizosaccharomyces pombe (strain 972 / ATCC 24843) (Fission yeast).